Here is a 173-residue protein sequence, read N- to C-terminus: Interferon gamma (173 aa).

The first 22 residues, 1-22, serve as a signal peptide directing secretion; that stretch reads MNATHCILALQLCLLAISGCSS. Q23 carries the post-translational modification Pyrrolidone carboxylic acid. 2 N-linked (GlcNAc...) asparagine glycosylation sites follow: N38 and N105.

The protein belongs to the type II (or gamma) interferon family. In terms of assembly, homodimer. Interacts with IFNGR1 (via extracellular domain); this interaction promotes IFNGR1 dimerization. Released primarily from activated T lymphocytes.

The protein resides in the secreted. Type II interferon produced by immune cells such as T-cells and NK cells that plays crucial roles in antimicrobial, antiviral, and antitumor responses by activating effector immune cells and enhancing antigen presentation. Primarily signals through the JAK-STAT pathway after interaction with its receptor IFNGR1 to affect gene regulation. Upon IFNG binding, IFNGR1 intracellular domain opens out to allow association of downstream signaling components JAK2, JAK1 and STAT1, leading to STAT1 activation, nuclear translocation and transcription of IFNG-regulated genes. Many of the induced genes are transcription factors such as IRF1 that are able to further drive regulation of a next wave of transcription. Plays a role in class I antigen presentation pathway by inducing a replacement of catalytic proteasome subunits with immunoproteasome subunits. In turn, increases the quantity, quality, and repertoire of peptides for class I MHC loading. Increases the efficiency of peptide generation also by inducing the expression of activator PA28 that associates with the proteasome and alters its proteolytic cleavage preference. Up-regulates as well MHC II complexes on the cell surface by promoting expression of several key molecules such as cathepsins B/CTSB, H/CTSH, and L/CTSL. Participates in the regulation of hematopoietic stem cells during development and under homeostatic conditions by affecting their development, quiescence, and differentiation. The sequence is that of Interferon gamma (IFNG) from Meriones unguiculatus (Mongolian jird).